A 170-amino-acid polypeptide reads, in one-letter code: uncharacterized protein (170 aa).

This is an uncharacterized protein from Acidithiobacillus ferrooxidans (Thiobacillus ferrooxidans).